The sequence spans 102 residues: Protamine-2 (102 aa).

Disordered regions lie at residues 1–40 and 67–102; these read MVRY…SPEH and HRQQ…CRRH. Phosphoserine is present on residues serine 8, serine 10, and serine 37.

The protein belongs to the protamine P2 family. Interacts with TDRP. In terms of processing, proteolytic processing into mature chains is required for histone eviction during spermatogenesis. Transition proteins (TNP1 and TNP2) are required for processing. In terms of tissue distribution, testis.

Its subcellular location is the nucleus. The protein localises to the chromosome. Protamines substitute for histones in the chromatin of sperm during the haploid phase of spermatogenesis. They compact sperm DNA into a highly condensed, stable and inactive complex. In Pan troglodytes (Chimpanzee), this protein is Protamine-2 (PRM2).